The sequence spans 134 residues: ATP synthase epsilon chain, plastid (134 aa).

Belongs to the ATPase epsilon chain family. F-type ATPases have 2 components, CF(1) - the catalytic core - and CF(0) - the membrane proton channel. CF(1) has five subunits: alpha(3), beta(3), gamma(1), delta(1), epsilon(1). CF(0) has three main subunits: a, b and c.

The protein resides in the plastid membrane. Produces ATP from ADP in the presence of a proton gradient across the membrane. The chain is ATP synthase epsilon chain, plastid from Prototheca wickerhamii.